A 360-amino-acid polypeptide reads, in one-letter code: MPPSLPCRCQEAPTPVFGYLYQIVELGVMRLFVEKRVFNEIPDEGILIADLATKTGIEFNLLERLVNFLISSRIFTSSSPGYVHHTPTSKYFTERRAQLWYPHIFDTFLTSAVKWPEYFDINGMQEPQCSSKSPFGFGSGYSDKSVYEIFDLMPKRSSDFNATMALSMGEMPILGMYDFSWIGEYGKRPEVKDRTLFVDVSGGKGQALQAILEAFPSIIPEQCVLEDQEKVIEEAKLATGPLETVKKVPIDLFGEQPVKGALVYYIRRVLNDWSDAEVVQILRSIRDACAPDSKVLISENLLPDEPPLKLAAIDVWMLNFGGKRRNKGNFGALARRAGFELSSIAEDDKTKSAVLELVVA.

S-adenosyl-L-methionine-binding positions include 201-202, Asp-227, 251-252, Arg-267, and Arg-268; these read SG and DL.

It belongs to the class I-like SAM-binding methyltransferase superfamily. Cation-independent O-methyltransferase family.

The protein operates within secondary metabolite biosynthesis. Methyltransferase; part of the gene cluster that mediates the biosynthesis of varicidin A, an antifungal natural product containing a cis-octahydrodecalin core. The PKS module of pvhA together with the enoylreductase pvhC catalyze the formation of the polyketide unit which is then conjugated to L-isoleucine by the condensation domain of the NRPS module. Activity of the Dieckmann cyclase domain (RED) of pvhA results in release of an acyclic tetramate. The cytochrome P450 monooxygenase pvhE then catalyzes the oxidation of the C21 methyl group to a to carboxylate group. The methyltransferase pvhD then further methylates the pvhE product. The Diels-Alderase pvhB is able to catalyze Diels-Alder cycloaddition using both pvhE and pvhD products as substrates to form the decalin ring, yielding varicidin B and A, respectively. The chain is Methyltransferase pvhD from Talaromyces variabilis (Penicillium variabile).